A 172-amino-acid polypeptide reads, in one-letter code: UPF0102 protein Pcryo_2198 (172 aa).

The protein belongs to the UPF0102 family.

This is UPF0102 protein Pcryo_2198 from Psychrobacter cryohalolentis (strain ATCC BAA-1226 / DSM 17306 / VKM B-2378 / K5).